A 703-amino-acid chain; its full sequence is Ion-translocating oxidoreductase complex subunit C (703 aa).

2 4Fe-4S ferredoxin-type domains span residues 368 to 397 (MAPQ…QQLY) and 407 to 436 (KARN…VQYY). [4Fe-4S] cluster contacts are provided by C377, C380, C383, C387, C416, C419, C422, and C426. 2 disordered regions span residues 505–558 (AVPA…EDPR) and 653–674 (AQQA…EEDP). Positions 524-539 (AAREARKAQARERRAQ) are enriched in basic and acidic residues.

Belongs to the 4Fe4S bacterial-type ferredoxin family. RnfC subfamily. In terms of assembly, the complex is composed of six subunits: RnfA, RnfB, RnfC, RnfD, RnfE and RnfG. Requires [4Fe-4S] cluster as cofactor.

Its subcellular location is the cell inner membrane. Its function is as follows. Part of a membrane-bound complex that couples electron transfer with translocation of ions across the membrane. The sequence is that of Ion-translocating oxidoreductase complex subunit C from Serratia proteamaculans (strain 568).